The primary structure comprises 110 residues: Putative caspase recruitment domain-containing protein 17P (110 aa).

Residues 1 to 91 (MADKVLKEKR…HLAGTLGLSA (91 aa)) form the CARD domain.

In terms of assembly, interacts with pro-CASP1. Ubiquitous.

The protein localises to the cytoplasm. In terms of biological role, regulator of procaspase-1/CASP1 activation implicated in the regulation of the proteolytic maturation of pro-IL-1beta/IL1B and its release during inflammation. Inhibits the release of IL1B in response to LPS in monocytes. However, unlike CASP1, do not induce NF-kappa-B activation. In Homo sapiens (Human), this protein is Putative caspase recruitment domain-containing protein 17P (CARD17P).